The primary structure comprises 119 residues: Large ribosomal subunit protein uL18 (119 aa).

The protein belongs to the universal ribosomal protein uL18 family. Part of the 50S ribosomal subunit; part of the 5S rRNA/L5/L18/L25 subcomplex. Contacts the 5S and 23S rRNAs.

In terms of biological role, this is one of the proteins that bind and probably mediate the attachment of the 5S RNA into the large ribosomal subunit, where it forms part of the central protuberance. In Xanthomonas campestris pv. campestris (strain 8004), this protein is Large ribosomal subunit protein uL18.